We begin with the raw amino-acid sequence, 146 residues long: Universal stress protein MT1672 (146 aa).

Belongs to the universal stress protein A family.

The sequence is that of Universal stress protein MT1672 from Mycobacterium tuberculosis (strain CDC 1551 / Oshkosh).